The primary structure comprises 308 residues: Protoheme IX farnesyltransferase 2 (308 aa).

A run of 9 helical transmembrane segments spans residues 20–40 (VTKP…FLLA), 47–67 (AVLM…GCAI), 92–114 (IPLK…LLAW), 118–137 (LAAL…LYSL), 144–164 (VYGT…GYCA), 174–194 (LILL…IAIF), 218–238 (LHIV…PLAG), 240–260 (TGVG…LMAL), and 275–295 (QVFG…ALDF).

It belongs to the UbiA prenyltransferase family. Protoheme IX farnesyltransferase subfamily.

It is found in the cell inner membrane. The enzyme catalyses heme b + (2E,6E)-farnesyl diphosphate + H2O = Fe(II)-heme o + diphosphate. The protein operates within porphyrin-containing compound metabolism; heme O biosynthesis; heme O from protoheme: step 1/1. Converts heme B (protoheme IX) to heme O by substitution of the vinyl group on carbon 2 of heme B porphyrin ring with a hydroxyethyl farnesyl side group. The polypeptide is Protoheme IX farnesyltransferase 2 (Shewanella loihica (strain ATCC BAA-1088 / PV-4)).